A 90-amino-acid chain; its full sequence is Small ribosomal subunit protein uS15c (90 aa).

The protein belongs to the universal ribosomal protein uS15 family. As to quaternary structure, part of the 30S ribosomal subunit.

The protein localises to the plastid. Its subcellular location is the chloroplast. This Brachypodium distachyon (Purple false brome) protein is Small ribosomal subunit protein uS15c (rps15-A).